Reading from the N-terminus, the 214-residue chain is Urease accessory protein UreG (214 aa).

Residues 1–20 (MSQLHAVPGRTKKLPPLRVG) are disordered. 23–30 (GPVGSGKT) lines the GTP pocket.

Belongs to the SIMIBI class G3E GTPase family. UreG subfamily. In terms of assembly, homodimer. UreD, UreF and UreG form a complex that acts as a GTP-hydrolysis-dependent molecular chaperone, activating the urease apoprotein by helping to assemble the nickel containing metallocenter of UreC. The UreE protein probably delivers the nickel.

The protein localises to the cytoplasm. Facilitates the functional incorporation of the urease nickel metallocenter. This process requires GTP hydrolysis, probably effectuated by UreG. The chain is Urease accessory protein UreG from Leptothrix cholodnii (strain ATCC 51168 / LMG 8142 / SP-6) (Leptothrix discophora (strain SP-6)).